The following is a 538-amino-acid chain: Efflux pump radE (538 aa).

Basic and acidic residues-rich tracts occupy residues 1-12 (MATSRDFGREPP), 20-35 (EAGH…VSEH), and 65-74 (DPKEEERDPN). Disordered stretches follow at residues 1 to 35 (MATS…VSEH) and 65 to 90 (DPKE…PQNW). The next 12 helical transmembrane spans lie at 100–120 (AVLS…APGI), 134–154 (LATF…LVLA), 163–183 (VVIY…CALS), 194–214 (FLCG…IADL), 225–245 (SVWS…GGFL), 253–273 (WIFW…LLVL), 327–347 (PICL…YFMI), 362–382 (EGIV…GVVV), 409–429 (IPPT…YGWT), 436–456 (WAVP…INIS), 482–502 (IFGA…GLGW), and 505–525 (SLLA…FYYG).

It belongs to the major facilitator superfamily.

The protein localises to the cell membrane. In terms of biological role, efflux pump that might be required for efficient secretion of radicicol or other secondary metabolies produced by the radicicol gene cluster. The sequence is that of Efflux pump radE from Floropilus chiversii (Chaetomium chiversii).